Here is a 478-residue protein sequence, read N- to C-terminus: V-type ATP synthase beta chain (478 aa).

The protein belongs to the ATPase alpha/beta chains family.

Produces ATP from ADP in the presence of a proton gradient across the membrane. The V-type beta chain is a regulatory subunit. This is V-type ATP synthase beta chain from Thermus thermophilus (strain ATCC BAA-163 / DSM 7039 / HB27).